The sequence spans 117 residues: DNA-directed RNA polymerase subunit omega (117 aa).

This sequence belongs to the RNA polymerase subunit omega family. As to quaternary structure, the RNAP catalytic core consists of 2 alpha, 1 beta, 1 beta' and 1 omega subunit. When a sigma factor is associated with the core the holoenzyme is formed, which can initiate transcription.

The catalysed reaction is RNA(n) + a ribonucleoside 5'-triphosphate = RNA(n+1) + diphosphate. In terms of biological role, promotes RNA polymerase assembly. Latches the N- and C-terminal regions of the beta' subunit thereby facilitating its interaction with the beta and alpha subunits. The protein is DNA-directed RNA polymerase subunit omega of Roseobacter denitrificans (strain ATCC 33942 / OCh 114) (Erythrobacter sp. (strain OCh 114)).